Here is a 303-residue protein sequence, read N- to C-terminus: Probable serine acetyltransferase 1 (303 aa).

Disordered regions lie at residues 1–36 (MTAG…ESDA) and 271–290 (NPAR…ESMD).

It belongs to the transferase hexapeptide repeat family. As to quaternary structure, homomultimer.

The catalysed reaction is L-serine + acetyl-CoA = O-acetyl-L-serine + CoA. It functions in the pathway amino-acid biosynthesis; L-cysteine biosynthesis; L-cysteine from L-serine: step 1/2. The protein is Probable serine acetyltransferase 1 (SAT1) of Oryza sativa subsp. japonica (Rice).